Here is a 363-residue protein sequence, read N- to C-terminus: Photosystem II protein D1 1 (363 aa).

The next 3 helical transmembrane spans lie at 32–49, 121–136, and 145–159; these read YVGW…VSAI, HFLI…QWEL, and WIAM…AATA. Histidine 121 serves as a coordination point for chlorophyll a. Tyrosine 129 contacts pheophytin a. The [CaMn4O5] cluster site is built by glutamate 173 and glutamate 192. Residues 200-221 form a helical membrane-spanning segment; it reads FHMLGVVGVFGGAFLSAMHGSL. Histidine 201 is a binding site for chlorophyll a. A quinone contacts are provided by residues histidine 218 and 268-269; that span reads AF. Histidine 218 is a binding site for Fe cation. Fe cation is bound at residue histidine 276. A helical membrane pass occupies residues 278-292; the sequence is LLAVLPTIGIWFAAL. [CaMn4O5] cluster-binding residues include histidine 336 and alanine 348. A propeptide spanning residues 349-363 is cleaved from the precursor; sequence STESKEIPTIPIMTS.

This sequence belongs to the reaction center PufL/M/PsbA/D family. PSII is composed of 1 copy each of membrane proteins PsbA, PsbB, PsbC, PsbD, PsbE, PsbF, PsbH, PsbI, PsbJ, PsbK, PsbL, PsbM, PsbT, PsbX, PsbY, PsbZ, Psb30/Ycf12, peripheral proteins PsbO, CyanoQ (PsbQ), PsbU, PsbV and a large number of cofactors. It forms dimeric complexes. The cofactor is The D1/D2 heterodimer binds P680, chlorophylls that are the primary electron donor of PSII, and subsequent electron acceptors. It shares a non-heme iron and each subunit binds pheophytin, quinone, additional chlorophylls, carotenoids and lipids. D1 provides most of the ligands for the Mn4-Ca-O5 cluster of the oxygen-evolving complex (OEC). There is also a Cl(-1) ion associated with D1 and D2, which is required for oxygen evolution. The PSII complex binds additional chlorophylls, carotenoids and specific lipids.. Post-translationally, tyr-164 forms a radical intermediate that is referred to as redox-active TyrZ, YZ or Y-Z. In terms of processing, C-terminally processed by CtpA; processing is essential to allow assembly of the oxygen-evolving complex and thus photosynthetic growth.

The protein localises to the cellular thylakoid membrane. The catalysed reaction is 2 a plastoquinone + 4 hnu + 2 H2O = 2 a plastoquinol + O2. Its function is as follows. Photosystem II (PSII) is a light-driven water:plastoquinone oxidoreductase that uses light energy to abstract electrons from H(2)O, generating O(2) and a proton gradient subsequently used for ATP formation. It consists of a core antenna complex that captures photons, and an electron transfer chain that converts photonic excitation into a charge separation. The D1/D2 (PsbA/PsbD) reaction center heterodimer binds P680, the primary electron donor of PSII as well as several subsequent electron acceptors. This Acaryochloris marina (strain MBIC 11017) protein is Photosystem II protein D1 1.